The following is a 504-amino-acid chain: Multidrug efflux pump LfrA (504 aa).

The next 14 helical transmembrane spans lie at 19 to 39 (WVAL…NTVL), 58 to 78 (LWIV…MGSL), 87 to 107 (LLLI…FAPS), 110 to 130 (LLVG…PSTL), 145 to 165 (LAIA…PIVG), 172 to 192 (FHWG…LVLG), 206 to 226 (PFDP…VWAV), 233 to 253 (GLSA…ALFV), 275 to 295 (TSSI…IFFI), 309 to 329 (TAGL…LAVV), 338 to 358 (DTLM…ILLF), 361 to 381 (NLTV…VGVS), 408 to 428 (AYEL…TAFY), and 480 to 500 (IAPT…VVGV).

The protein belongs to the major facilitator superfamily.

Its subcellular location is the cell inner membrane. With respect to regulation, inhibited by the protonophore carbonyl cyanide m-chorophenylhydrazone (CCCP). Ethidium bromide efflux is inhibited by chlorpromazine, thioridazine and verapamil. In terms of biological role, energy-dependent efflux pump that contributes to drug resistance. Catalyzes the efflux of norfloxacin and several related fluoroquinolones (FQ). Contributes significantly to the intrinsic MICs for ethidium bromide and acriflavine. Overexpression confers low-level resistance to hydrophilic FQ such as ciprofloxacin, ofloxacin and levofloxacin, and to ethidium bromide, acridine, acriflavine, rhodamine 123 and some quaternary ammonium compounds. May contribute to resistance to certain beta-lactams. Probably uses the proton motive force to export drugs. The protein is Multidrug efflux pump LfrA of Mycolicibacterium smegmatis (strain ATCC 700084 / mc(2)155) (Mycobacterium smegmatis).